A 345-amino-acid polypeptide reads, in one-letter code: OVARIAN TUMOR DOMAIN-containing deubiquitinating enzyme 9 (345 aa).

The 125-residue stretch at 204–328 (LVENKIEGDG…EVHYNSIYPE (125 aa)) folds into the OTU domain. Residue Asp-212 is part of the active site. Catalysis depends on Cys-215, which acts as the Nucleophile. Residue His-321 is part of the active site.

This sequence belongs to the peptidase C85 family.

The enzyme catalyses Thiol-dependent hydrolysis of ester, thioester, amide, peptide and isopeptide bonds formed by the C-terminal Gly of ubiquitin (a 76-residue protein attached to proteins as an intracellular targeting signal).. Hydrolase that can remove conjugated ubiquitin from proteins in vitro and may therefore play an important regulatory role at the level of protein turnover by preventing degradation. Cysteine protease with a preference for 'Lys-63' and 'Lys-48' -linked ubiquitin (UB) tetramers as substrates. Also cleaves RUB-GST fusion. The protein is OVARIAN TUMOR DOMAIN-containing deubiquitinating enzyme 9 of Arabidopsis thaliana (Mouse-ear cress).